Reading from the N-terminus, the 563-residue chain is Arginine--tRNA ligase (563 aa).

Positions 120 to 130 (PNIAKPFHVGH) match the 'HIGH' region motif.

It belongs to the class-I aminoacyl-tRNA synthetase family. In terms of assembly, monomer.

The protein resides in the cytoplasm. It catalyses the reaction tRNA(Arg) + L-arginine + ATP = L-arginyl-tRNA(Arg) + AMP + diphosphate. The sequence is that of Arginine--tRNA ligase from Clostridium botulinum (strain Alaska E43 / Type E3).